Here is a 125-residue protein sequence, read N- to C-terminus: Bublin coiled-coil protein (125 aa).

Residues 46–95 are a coiled coil; it reads IRKLDTQLDHLNDYMSKMEERLKAHNDRMMETLKQQKEEREKRRRSFHER. Positions 79 to 125 are disordered; it reads KQQKEEREKRRRSFHERMSQNQSEDEEFKKQMSSILKRVQSVKRTEK.

Expressed in many epithelial tissues, including the pharynx, intestine, excretory canal and hypodermis.

It is found in the cell junction. Its subcellular location is the cytoplasm. It localises to the cytoskeleton. Dynamic component of the endotube in intestinal cells, interacts with intermediate filament and regulates intestinal lumen morphology. The polypeptide is Bublin coiled-coil protein (Caenorhabditis elegans).